We begin with the raw amino-acid sequence, 791 residues long: Nuclear cap-binding protein subunit 1 (791 aa).

A compositionally biased stretch (basic and acidic residues) spans M1–P14. The disordered stretch occupies residues M1–P24. One can recognise an MIF4G domain in the interval E28–K240. Residues L641–I714 adopt a coiled-coil conformation. The segment at K668–G687 is disordered.

Belongs to the NCBP1 family. As to quaternary structure, component of the nuclear cap-binding complex (CBC), a heterodimer composed of ncbp1/cbp80 and ncbp2/cbp20 that interacts with m7GpppG-capped RNA. Component of an alternative nuclear cap-binding complex (CBC) composed of ncbp1/cbp80 and ncbp3.

The protein resides in the nucleus. The protein localises to the cytoplasm. Component of the cap-binding complex (CBC), which binds cotranscriptionally to the 5'-cap of pre-mRNAs and is involved in various processes such as pre-mRNA splicing, translation regulation, nonsense-mediated mRNA decay, RNA-mediated gene silencing (RNAi) by microRNAs (miRNAs) and mRNA export. The CBC complex is involved in mRNA export from the nucleus, leading to the recruitment of the mRNA export machinery to the 5'-end of mRNA and to mRNA export in a 5' to 3' direction through the nuclear pore. The CBC complex is also involved in mediating U snRNA and intronless mRNAs export from the nucleus. The CBC complex is essential for a pioneer round of mRNA translation, before steady state translation when the CBC complex is replaced by cytoplasmic cap-binding protein eIF4E. The pioneer round of mRNA translation mediated by the CBC complex plays a central role in nonsense-mediated mRNA decay (NMD), NMD only taking place in mRNAs bound to the CBC complex, but not on eIF4E-bound mRNAs. The CBC complex enhances NMD in mRNAs containing at least one exon-junction complex (EJC), promoting the interaction between UPF1 and UPF2. The CBC complex is also involved in 'failsafe' NMD, which is independent of the EJC complex, while it does not participate in Staufen-mediated mRNA decay (SMD). During cell proliferation, the CBC complex is also involved in microRNAs (miRNAs) biogenesis via its interaction with SRRT/ARS2 and is required for miRNA-mediated RNA interference. The CBC complex also acts as a negative regulator of parn, thereby acting as an inhibitor of mRNA deadenylation. In the CBC complex, ncbp1/cbp80 does not bind directly capped RNAs (m7GpppG-capped RNA) but is required to stabilize the movement of the N-terminal loop of ncbp2/cbp20 and lock the CBC into a high affinity cap-binding state with the cap structure. Associates with NCBP3 to form an alternative cap-binding complex (CBC) which plays a key role in mRNA export. The conventional CBC with NCBP2 binds both small nuclear RNA (snRNA) and messenger (mRNA) and is involved in their export from the nucleus whereas the alternative CBC with NCBP3 does not bind snRNA and associates only with mRNA thereby playing a role only in mRNA export. In Xenopus tropicalis (Western clawed frog), this protein is Nuclear cap-binding protein subunit 1 (ncbp1).